Consider the following 234-residue polypeptide: MLVELNLDAGNIISEDVHRIGILAVGSHLENHGPALPIDTDAKIASYVALEAALRTGARFLGVLYAASEFPYVKHGIHMDRDELVERELKPVLRKARRLLNLEAAVIVNGHGGNKLEDCMDDLEEELGLEIAWNNRIVEIEGPHAGSGELSAGLILGIADLRRLDECIPELYPEIGMIGLKEAREANREIDKAARICERDGVNPDPVLGQRILDDAVESVISDVKELLKIIQEF.

The Fe cation site is built by Glu-30, His-32, Asp-41, and His-111.

The protein belongs to the creatininase superfamily. FAPy deformylase family. Homodimer. Fe(2+) is required as a cofactor. Requires Zn(2+) as cofactor.

The enzyme catalyses 2-amino-5-formylamino-6-(5-phospho-D-ribosylamino)pyrimidin-4(3H)-one + H2O = 2,5-diamino-6-(1-D-ribosylamino)pyrimidin-4(3H)-one 5'-phosphate + formate + H(+). It functions in the pathway cofactor biosynthesis; coenzyme F420 biosynthesis. It participates in cofactor biosynthesis; riboflavin biosynthesis. Its function is as follows. Catalyzes the hydrolysis of the formamide of 2-amino-5-formylamino-6-ribosylamino-4(3H)-pyrimidinone 5'-monophosphate (FAPy) to form 2,5-diamino-6-ribosylamino-4(3H)-pyrimidinone 5'-phosphate (APy). This Methanothermobacter thermautotrophicus (strain ATCC 29096 / DSM 1053 / JCM 10044 / NBRC 100330 / Delta H) (Methanobacterium thermoautotrophicum) protein is 2-amino-5-formylamino-6-ribosylaminopyrimidin-4(3H)-one 5'-monophosphate deformylase.